A 571-amino-acid polypeptide reads, in one-letter code: Proline--tRNA ligase (571 aa).

This sequence belongs to the class-II aminoacyl-tRNA synthetase family. ProS type 1 subfamily. As to quaternary structure, homodimer.

It is found in the cytoplasm. The enzyme catalyses tRNA(Pro) + L-proline + ATP = L-prolyl-tRNA(Pro) + AMP + diphosphate. Functionally, catalyzes the attachment of proline to tRNA(Pro) in a two-step reaction: proline is first activated by ATP to form Pro-AMP and then transferred to the acceptor end of tRNA(Pro). As ProRS can inadvertently accommodate and process non-cognate amino acids such as alanine and cysteine, to avoid such errors it has two additional distinct editing activities against alanine. One activity is designated as 'pretransfer' editing and involves the tRNA(Pro)-independent hydrolysis of activated Ala-AMP. The other activity is designated 'posttransfer' editing and involves deacylation of mischarged Ala-tRNA(Pro). The misacylated Cys-tRNA(Pro) is not edited by ProRS. This is Proline--tRNA ligase from Pseudomonas syringae pv. tomato (strain ATCC BAA-871 / DC3000).